The primary structure comprises 250 residues: ATP synthase subunit a (250 aa).

6 helical membrane passes run 29 to 49, 84 to 104, 114 to 134, 143 to 163, 193 to 213, and 216 to 236; these read ASLF…FATS, FFPL…LGMF, IIVT…YGFY, VFVP…IEII, FVAS…LPLI, and VALT…FAVL.

It belongs to the ATPase A chain family. F-type ATPases have 2 components, CF(1) - the catalytic core - and CF(0) - the membrane proton channel. CF(1) has five subunits: alpha(3), beta(3), gamma(1), delta(1), epsilon(1). CF(0) has three main subunits: a(1), b(2) and c(9-12). The alpha and beta chains form an alternating ring which encloses part of the gamma chain. CF(1) is attached to CF(0) by a central stalk formed by the gamma and epsilon chains, while a peripheral stalk is formed by the delta and b chains.

It localises to the cell inner membrane. Functionally, key component of the proton channel; it plays a direct role in the translocation of protons across the membrane. The chain is ATP synthase subunit a from Rhizobium etli (strain CIAT 652).